The following is a 397-amino-acid chain: CCA-adding enzyme (397 aa).

ATP-binding residues include Gly26 and Arg29. The CTP site is built by Gly26 and Arg29. Mg(2+) contacts are provided by Asp39 and Asp41. Positions 110, 153, 156, 159, and 162 each coordinate ATP. Residues Arg110, Asp153, Arg156, Arg159, and Arg162 each contribute to the CTP site.

Belongs to the tRNA nucleotidyltransferase/poly(A) polymerase family. Bacterial CCA-adding enzyme type 3 subfamily. Homodimer. The cofactor is Mg(2+).

It catalyses the reaction a tRNA precursor + 2 CTP + ATP = a tRNA with a 3' CCA end + 3 diphosphate. The enzyme catalyses a tRNA with a 3' CCA end + 2 CTP + ATP = a tRNA with a 3' CCACCA end + 3 diphosphate. Catalyzes the addition and repair of the essential 3'-terminal CCA sequence in tRNAs without using a nucleic acid template. Adds these three nucleotides in the order of C, C, and A to the tRNA nucleotide-73, using CTP and ATP as substrates and producing inorganic pyrophosphate. tRNA 3'-terminal CCA addition is required both for tRNA processing and repair. Also involved in tRNA surveillance by mediating tandem CCA addition to generate a CCACCA at the 3' terminus of unstable tRNAs. While stable tRNAs receive only 3'-terminal CCA, unstable tRNAs are marked with CCACCA and rapidly degraded. This chain is CCA-adding enzyme, found in Bacillus mycoides (strain KBAB4) (Bacillus weihenstephanensis).